A 247-amino-acid chain; its full sequence is Carboxy-S-adenosyl-L-methionine synthase (247 aa).

Residues Tyr40, 65-67, 90-91, 122-123, Asn137, and Arg204 contribute to the S-adenosyl-L-methionine site; these read GCS, DN, and DI.

This sequence belongs to the class I-like SAM-binding methyltransferase superfamily. Cx-SAM synthase family. In terms of assembly, homodimer.

It catalyses the reaction prephenate + S-adenosyl-L-methionine = carboxy-S-adenosyl-L-methionine + 3-phenylpyruvate + H2O. Functionally, catalyzes the conversion of S-adenosyl-L-methionine (SAM) to carboxy-S-adenosyl-L-methionine (Cx-SAM). This chain is Carboxy-S-adenosyl-L-methionine synthase, found in Pseudomonas syringae pv. tomato (strain ATCC BAA-871 / DC3000).